The chain runs to 91 residues: Small ribosomal subunit protein uS15 (91 aa).

This sequence belongs to the universal ribosomal protein uS15 family. In terms of assembly, part of the 30S ribosomal subunit. Forms a bridge to the 50S subunit in the 70S ribosome, contacting the 23S rRNA.

Functionally, one of the primary rRNA binding proteins, it binds directly to 16S rRNA where it helps nucleate assembly of the platform of the 30S subunit by binding and bridging several RNA helices of the 16S rRNA. Forms an intersubunit bridge (bridge B4) with the 23S rRNA of the 50S subunit in the ribosome. The chain is Small ribosomal subunit protein uS15 from Hydrogenobaculum sp. (strain Y04AAS1).